We begin with the raw amino-acid sequence, 225 residues long: Protein ZW2 (225 aa).

Residues 7–225 (SETFASFFND…FYLRLRDLGV (219 aa)) form the DOG1 domain.

May be involved in the regulation of abscisic acid (ABA) sensitivity. The sequence is that of Protein ZW2 from Arabidopsis thaliana (Mouse-ear cress).